We begin with the raw amino-acid sequence, 142 residues long: Large ribosomal subunit protein uL11 (142 aa).

Belongs to the universal ribosomal protein uL11 family. Part of the ribosomal stalk of the 50S ribosomal subunit. Interacts with L10 and the large rRNA to form the base of the stalk. L10 forms an elongated spine to which L12 dimers bind in a sequential fashion forming a multimeric L10(L12)X complex. In terms of processing, one or more lysine residues are methylated.

Its function is as follows. Forms part of the ribosomal stalk which helps the ribosome interact with GTP-bound translation factors. The protein is Large ribosomal subunit protein uL11 of Brucella anthropi (strain ATCC 49188 / DSM 6882 / CCUG 24695 / JCM 21032 / LMG 3331 / NBRC 15819 / NCTC 12168 / Alc 37) (Ochrobactrum anthropi).